Reading from the N-terminus, the 880-residue chain is Valine--tRNA ligase (880 aa).

Positions 49–59 match the 'HIGH' region motif; it reads PNVTGKLHLGH. The 'KMSKS' region signature appears at 525–529; the sequence is KMSKS. Lysine 528 provides a ligand contact to ATP. A coiled-coil region spans residues 809-879; the sequence is LAGLLDLEEE…AVRARIKELK (71 aa).

It belongs to the class-I aminoacyl-tRNA synthetase family. ValS type 1 subfamily. In terms of assembly, monomer.

The protein localises to the cytoplasm. The catalysed reaction is tRNA(Val) + L-valine + ATP = L-valyl-tRNA(Val) + AMP + diphosphate. Catalyzes the attachment of valine to tRNA(Val). As ValRS can inadvertently accommodate and process structurally similar amino acids such as threonine, to avoid such errors, it has a 'posttransfer' editing activity that hydrolyzes mischarged Thr-tRNA(Val) in a tRNA-dependent manner. This chain is Valine--tRNA ligase, found in Halalkalibacterium halodurans (strain ATCC BAA-125 / DSM 18197 / FERM 7344 / JCM 9153 / C-125) (Bacillus halodurans).